Reading from the N-terminus, the 255-residue chain is Imidazole glycerol phosphate synthase subunit HisF (255 aa).

Catalysis depends on residues aspartate 12 and aspartate 131.

Belongs to the HisA/HisF family. As to quaternary structure, heterodimer of HisH and HisF.

The protein resides in the cytoplasm. The enzyme catalyses 5-[(5-phospho-1-deoxy-D-ribulos-1-ylimino)methylamino]-1-(5-phospho-beta-D-ribosyl)imidazole-4-carboxamide + L-glutamine = D-erythro-1-(imidazol-4-yl)glycerol 3-phosphate + 5-amino-1-(5-phospho-beta-D-ribosyl)imidazole-4-carboxamide + L-glutamate + H(+). It functions in the pathway amino-acid biosynthesis; L-histidine biosynthesis; L-histidine from 5-phospho-alpha-D-ribose 1-diphosphate: step 5/9. Its function is as follows. IGPS catalyzes the conversion of PRFAR and glutamine to IGP, AICAR and glutamate. The HisF subunit catalyzes the cyclization activity that produces IGP and AICAR from PRFAR using the ammonia provided by the HisH subunit. The polypeptide is Imidazole glycerol phosphate synthase subunit HisF (Neisseria gonorrhoeae (strain ATCC 700825 / FA 1090)).